Here is a 261-residue protein sequence, read N- to C-terminus: tRNA pseudouridine synthase A (261 aa).

The active-site Nucleophile is the Asp51. Tyr109 is a substrate binding site.

It belongs to the tRNA pseudouridine synthase TruA family. In terms of assembly, homodimer.

The catalysed reaction is uridine(38/39/40) in tRNA = pseudouridine(38/39/40) in tRNA. In terms of biological role, formation of pseudouridine at positions 38, 39 and 40 in the anticodon stem and loop of transfer RNAs. In Shewanella sp. (strain MR-7), this protein is tRNA pseudouridine synthase A.